Reading from the N-terminus, the 301-residue chain is Cardiolipin synthase (CMP-forming) (301 aa).

Positions 70–93 (SGAGKAAPRPAAGAGAAAEAPGGQ) are disordered. Residues 71–93 (GAGKAAPRPAAGAGAAAEAPGGQ) are compositionally biased toward low complexity. The next 5 membrane-spanning stretches (helical) occupy residues 109–129 (IPNM…YLII), 133–153 (FNIA…DGFI), 190–212 (IPVP…VFYV), 250–270 (LILV…SIYL), and 272–292 (ILWC…YHYG).

Belongs to the CDP-alcohol phosphatidyltransferase class-I family. It depends on a divalent metal cation as a cofactor. Highly expressed in tissues such as heart, skeletal muscle and liver.

The protein localises to the mitochondrion inner membrane. The enzyme catalyses a CDP-1,2-diacyl-sn-glycerol + a 1,2-diacyl-sn-glycero-3-phospho-(1'-sn-glycerol) = a cardiolipin + CMP + H(+). In terms of biological role, catalyzes the synthesis of cardiolipin (CL) (diphosphatidylglycerol) by specifically transferring a phosphatidyl group from CDP-diacylglycerol to phosphatidylglycerol (PG). CL is a key phospholipid in mitochondrial membranes and plays important roles in maintaining the functional integrity and dynamics of mitochondria under both optimal and stress conditions. The chain is Cardiolipin synthase (CMP-forming) (CRLS1) from Homo sapiens (Human).